The sequence spans 541 residues: Chaperonin GroEL (541 aa).

ATP contacts are provided by residues 29-32, 86-90, G413, 477-479, and D493; these read TLGP, DGTTT, and DAL.

It belongs to the chaperonin (HSP60) family. In terms of assembly, forms a cylinder of 14 subunits composed of two heptameric rings stacked back-to-back. Interacts with the co-chaperonin GroES.

The protein resides in the cytoplasm. The enzyme catalyses ATP + H2O + a folded polypeptide = ADP + phosphate + an unfolded polypeptide.. Its function is as follows. Together with its co-chaperonin GroES, plays an essential role in assisting protein folding. The GroEL-GroES system forms a nano-cage that allows encapsulation of the non-native substrate proteins and provides a physical environment optimized to promote and accelerate protein folding. The sequence is that of Chaperonin GroEL from Clostridium botulinum (strain 657 / Type Ba4).